A 541-amino-acid polypeptide reads, in one-letter code: Phosphoenolpyruvate carboxykinase (ATP) (541 aa).

R67, Y207, and K213 together coordinate substrate. ATP-binding positions include K213, H232, and 248 to 256 (GLSGTGKTT). The Mn(2+) site is built by K213 and H232. D269 serves as a coordination point for Mn(2+). ATP contacts are provided by residues E297, R333, 449 to 450 (RI), and T455. Position 333 (R333) interacts with substrate.

It belongs to the phosphoenolpyruvate carboxykinase (ATP) family. In terms of assembly, monomer. The cofactor is Mn(2+).

It localises to the cytoplasm. The catalysed reaction is oxaloacetate + ATP = phosphoenolpyruvate + ADP + CO2. The protein operates within carbohydrate biosynthesis; gluconeogenesis. Its function is as follows. Involved in the gluconeogenesis. Catalyzes the conversion of oxaloacetate (OAA) to phosphoenolpyruvate (PEP) through direct phosphoryl transfer between the nucleoside triphosphate and OAA. This Aliivibrio salmonicida (strain LFI1238) (Vibrio salmonicida (strain LFI1238)) protein is Phosphoenolpyruvate carboxykinase (ATP).